A 236-amino-acid polypeptide reads, in one-letter code: CBS domain-containing protein CBSX1, chloroplastic (236 aa).

A chloroplast-targeting transit peptide spans 1–53; the sequence is MDAVLYSVPLSFTPLRASSSPSSPYLLLPRFLSVQPCHKFTFSRSFPSKSRIP. Residues 47 to 66 are disordered; it reads PSKSRIPSASSAAGSTLMTN. At serine 54 the chain carries N-acetylserine. 2 CBS domains span residues 81-142 and 175-231; these read MTKK…GRTE and MTPA…IKRS.

The protein resides in the plastid. The protein localises to the chloroplast. The sequence is that of CBS domain-containing protein CBSX1, chloroplastic (CBSX1) from Arabidopsis thaliana (Mouse-ear cress).